Reading from the N-terminus, the 568-residue chain is Arginine--tRNA ligase (568 aa).

The 'HIGH' region signature appears at 129 to 139; the sequence is ANPTGPLHIGH.

It belongs to the class-I aminoacyl-tRNA synthetase family. As to quaternary structure, monomer.

It localises to the cytoplasm. The enzyme catalyses tRNA(Arg) + L-arginine + ATP = L-arginyl-tRNA(Arg) + AMP + diphosphate. The chain is Arginine--tRNA ligase from Wolbachia pipientis wMel.